The following is a 250-amino-acid chain: uncharacterized protein (250 aa).

To class-3 of adenylyl cyclases.

This is an uncharacterized protein from Mycobacterium tuberculosis (strain ATCC 25618 / H37Rv).